A 415-amino-acid polypeptide reads, in one-letter code: Plasminogen activator inhibitor 2 (415 aa).

Cysteine 5 and cysteine 405 are disulfide-bonded. Asparagine 75, asparagine 115, and asparagine 339 each carry an N-linked (GlcNAc...) asparagine glycan.

This sequence belongs to the serpin family. Ov-serpin subfamily. In terms of assembly, interacts with PSMB1. In terms of processing, the signal sequence is not cleaved.

It localises to the cytoplasm. The protein resides in the secreted. Its subcellular location is the extracellular space. Inhibits urokinase-type plasminogen activator. The monocyte derived PAI-2 is distinct from the endothelial cell-derived PAI-1. This Homo sapiens (Human) protein is Plasminogen activator inhibitor 2 (SERPINB2).